Reading from the N-terminus, the 173-residue chain is Shikimate kinase (173 aa).

12-17 (GSGKTT) is an ATP binding site. A Mg(2+)-binding site is contributed by threonine 16. Substrate is bound by residues aspartate 34, arginine 58, and glycine 80. Position 118 (arginine 118) interacts with ATP. Arginine 136 lines the substrate pocket.

It belongs to the shikimate kinase family. As to quaternary structure, monomer. Mg(2+) is required as a cofactor.

It localises to the cytoplasm. It catalyses the reaction shikimate + ATP = 3-phosphoshikimate + ADP + H(+). Its pathway is metabolic intermediate biosynthesis; chorismate biosynthesis; chorismate from D-erythrose 4-phosphate and phosphoenolpyruvate: step 5/7. In terms of biological role, catalyzes the specific phosphorylation of the 3-hydroxyl group of shikimic acid using ATP as a cosubstrate. The polypeptide is Shikimate kinase (Moorella thermoacetica (strain ATCC 39073 / JCM 9320)).